The sequence spans 257 residues: Nopaline permease ATP-binding protein P (257 aa).

Positions 8 to 253 constitute an ABC transporter domain; that stretch reads LVAEDVHKNF…PTSPRCRAFL (246 aa). An ATP-binding site is contributed by 40–47; that stretch reads GSSGSGKS.

This sequence belongs to the ABC transporter superfamily.

The protein localises to the cell inner membrane. Its function is as follows. Component of the nopaline active transport system probably consisting of four subunits: Q, M, P and T. This system is also capable of transporting octopine provided that catabolic functions are induced with nopaline. The polypeptide is Nopaline permease ATP-binding protein P (nocP) (Agrobacterium fabrum (strain C58 / ATCC 33970) (Agrobacterium tumefaciens (strain C58))).